A 415-amino-acid polypeptide reads, in one-letter code: ATP-dependent Clp protease ATP-binding subunit ClpX (415 aa).

Positions 1–53 (MLRSKGDLVLGCSFCGKKEDERRRIVTGHGVSICNYCVERCAEYLRDRKPSAL) constitute a ClpX-type ZB domain. 4 residues coordinate Zn(2+): cysteine 12, cysteine 15, cysteine 34, and cysteine 37. 118 to 125 (PTGSGKTL) lines the ATP pocket.

The protein belongs to the ClpX chaperone family. Component of the ClpX-ClpP complex. Forms a hexameric ring that, in the presence of ATP, binds to fourteen ClpP subunits assembled into a disk-like structure with a central cavity, resembling the structure of eukaryotic proteasomes.

Functionally, ATP-dependent specificity component of the Clp protease. It directs the protease to specific substrates. Can perform chaperone functions in the absence of ClpP. The protein is ATP-dependent Clp protease ATP-binding subunit ClpX of Treponema pallidum (strain Nichols).